We begin with the raw amino-acid sequence, 367 residues long: MAFNSADINSFRDIWVFCEQREGKLINTDFELISEGRKLADERGSKLVGILLGHEVEEIAKELGGYGADKVIVCDHPELKFYTTDAYAKVLCDVVMEEKPEVILIGATNIGRDLGPRCAARLHTGLTADCTHLDIDMNKYVDFLSTSSTLDISSMTFPMEDTNLKMTRPAFGGHLMATIICPRFRPCMSTVRPGVMKKAEFSQEMAQACQVVTRHVNLSDEDLKTKVINIVKETKKIVDLIGAEIIVSVGRGISKDVQGGIALAEKLADAFGNGVVGGSRAVIDSGWLPADHQVGQTGKTVHPKVYVALGISGAIQHKAGMQDSELIIAVNKDETAPIFDCADYGITGDLFKIVPMMIDAIKEGKNA.

305-333 (VYVALGISGAIQHKAGMQDSELIIAVNKD) provides a ligand contact to FAD.

In terms of assembly, heterohexadecamer; tetramer of tetramers. Each tetramer is composed of 2 alpha (AcrC), a beta (AcrA) and a gamma (AcrB) subunit.

It localises to the cytoplasm. Its function is as follows. Part of the ETF-acryloyl-CoA reductase complex involved in the pathway of L-alanine fermentation. The electron transfer flavoprotein (ETF) serves as a specific electron acceptor for acryloyl-CoA reductase. This is Acryloyl-CoA reductase electron transfer subunit beta (acrA) from Anaerotignum propionicum (Clostridium propionicum).